We begin with the raw amino-acid sequence, 400 residues long: Deoxyhypusine synthase-like protein (400 aa).

The segment at Lys372–Lys400 is disordered.

This sequence belongs to the deoxyhypusine synthase family.

The protein is Deoxyhypusine synthase-like protein of Cyanothece sp. (strain PCC 7425 / ATCC 29141).